The sequence spans 222 residues: Glutathione S-transferase alpha-1 (222 aa).

At Met1 the chain carries N-acetylmethionine. Residues 3–83 form the GST N-terminal domain; the sequence is GKPVLHYFNA…YIATKYDLYG (81 aa). At Lys4 the chain carries N6-succinyllysine. Glutathione contacts are provided by residues Tyr9, Lys45, 54–55, and 67–68; these read QV and QT. One can recognise a GST C-terminal domain in the interval 85 to 208; it reads DMKERALIDM…QPGSQRKLPV (124 aa).

It belongs to the GST superfamily. Alpha family. In terms of assembly, homodimer. Homodimer or heterodimer of GSTA1 and GSTA2.

It localises to the cytoplasm. It carries out the reaction RX + glutathione = an S-substituted glutathione + a halide anion + H(+). The catalysed reaction is prostaglandin A2 + glutathione = prostaglandin A2-S-(R)-glutathione. It catalyses the reaction prostaglandin J2 + glutathione = prostaglandin J2-S-(R)-glutathione. The enzyme catalyses (13S)-hydroperoxy-(9Z,11E)-octadecadienoate + 2 glutathione = (13S)-hydroxy-(9Z,11E)-octadecadienoate + glutathione disulfide + H2O. It carries out the reaction androst-5-ene-3,17-dione = androst-4-ene-3,17-dione. In terms of biological role, glutathione S-transferase that catalyzes the nucleophilic attack of the sulfur atom of glutathione on the electrophilic groups of a wide range of exogenous and endogenous compounds. Involved in the formation of glutathione conjugates of both prostaglandin A2 (PGA2) and prostaglandin J2 (PGJ2). It also catalyzes the isomerization of D5-androstene-3,17-dione (AD) into D4-androstene-3,17-dione and may therefore play an important role in hormone biosynthesis. Through its glutathione-dependent peroxidase activity toward the fatty acid hydroperoxide (13S)-hydroperoxy-(9Z,11E)-octadecadienoate/13-HPODE it is also involved in the metabolism of oxidized linoleic acid. This chain is Glutathione S-transferase alpha-1 (Gsta1), found in Rattus norvegicus (Rat).